A 167-amino-acid chain; its full sequence is Antibacterial peptide PMAP-37 (167 aa).

The first 29 residues, 1-29, serve as a signal peptide directing secretion; that stretch reads METQRASLCLGRWSLWLLLLALVVPSASA. Positions 30–130 are excised as a propeptide; sequence QALSYREAVL…DITCNEIQSV (101 aa). Cystine bridges form between Cys85-Cys96 and Cys107-Cys124.

It belongs to the cathelicidin family.

Its subcellular location is the secreted. Exerts antimicrobial activity against both Gram-positive and negative bacteria with minimal inhibitory concentrations ranging over 1-4 micro molar. Its activity appears to be mediated by its ability to damage bacterial membranes. The chain is Antibacterial peptide PMAP-37 (PMAP37) from Sus scrofa (Pig).